The sequence spans 898 residues: Tight junction protein ZO-3 (898 aa).

In terms of domain architecture, PDZ 1 spans T11–R93. A disordered region spans residues P98–G165. Phosphoserine is present on residues S128, S156, S161, S195, and S313. Residues S187–R264 enclose the PDZ 2 domain. The segment at L295–P368 is disordered. Over residues R312–S349 the composition is skewed to basic and acidic residues. Residue T319 is modified to Phosphothreonine. 2 positions are modified to phosphoserine: S321 and S360. One can recognise a PDZ 3 domain in the interval D369–L435. The region spanning G464–A538 is the SH3 domain. The region spanning L569 to R750 is the Guanylate kinase-like domain. Residue S580 is modified to Phosphoserine. The disordered stretch occupies residues T759–L898. Over residues D762–L772 the composition is skewed to acidic residues. Over residues A780–S790 the composition is skewed to low complexity. Acidic residues predominate over residues Y796–E814. Over residues E831–R841 the composition is skewed to basic and acidic residues. Phosphoserine occurs at positions 835, 884, and 885.

The protein belongs to the MAGUK family. Heterodimer with TJP1. Interacts with UBN1. Interacts with occludin OCLN and claudins. Interacts with PATJ. Interacts with FASLG. Interacts with CCND1. In terms of processing, phosphorylated.

The protein resides in the cell membrane. It is found in the cell junction. The protein localises to the tight junction. Its subcellular location is the nucleus. Its function is as follows. TJP1, TJP2, and TJP3 are closely related scaffolding proteins that link tight junction (TJ) transmembrane proteins such as claudins, junctional adhesion molecules, and occludin to the actin cytoskeleton. The tight junction acts to limit movement of substances through the paracellular space and as a boundary between the compositionally distinct apical and basolateral plasma membrane domains of epithelial and endothelial cells. Binds and recruits PATJ to tight junctions where it connects and stabilizes apical and lateral components of tight junctions. Promotes cell-cycle progression through the sequestration of cyclin D1 (CCND1) at tight junctions during mitosis which prevents CCND1 degradation during M-phase and enables S-phase transition. With TJP1 and TJP2, participates in the junctional retention and stability of the transcription factor DBPA, but is not involved in its shuttling to the nucleus. Contrary to TJP2, TJP3 is dispensable for individual viability, embryonic development, epithelial differentiation, and the establishment of TJs, at least in the laboratory environment. The protein is Tight junction protein ZO-3 (TJP3) of Canis lupus familiaris (Dog).